A 265-amino-acid chain; its full sequence is tRNA pseudouridine synthase A (265 aa).

Aspartate 52 functions as the Nucleophile in the catalytic mechanism. Tyrosine 105 contributes to the substrate binding site.

This sequence belongs to the tRNA pseudouridine synthase TruA family.

The catalysed reaction is uridine(38/39/40) in tRNA = pseudouridine(38/39/40) in tRNA. Formation of pseudouridine at positions 38, 39 and 40 in the anticodon stem and loop of transfer RNAs. The polypeptide is tRNA pseudouridine synthase A (Archaeoglobus fulgidus (strain ATCC 49558 / DSM 4304 / JCM 9628 / NBRC 100126 / VC-16)).